A 682-amino-acid polypeptide reads, in one-letter code: DNA-directed RNA polymerase subunit beta' (682 aa).

Residues Cys-69, Cys-71, Cys-87, and Cys-90 each coordinate Zn(2+). Residues Asp-489, Asp-491, and Asp-493 each coordinate Mg(2+).

It belongs to the RNA polymerase beta' chain family. RpoC1 subfamily. In plastids the minimal PEP RNA polymerase catalytic core is composed of four subunits: alpha, beta, beta', and beta''. When a (nuclear-encoded) sigma factor is associated with the core the holoenzyme is formed, which can initiate transcription. Requires Mg(2+) as cofactor. Zn(2+) is required as a cofactor.

Its subcellular location is the plastid. The protein resides in the chloroplast. The enzyme catalyses RNA(n) + a ribonucleoside 5'-triphosphate = RNA(n+1) + diphosphate. Its function is as follows. DNA-dependent RNA polymerase catalyzes the transcription of DNA into RNA using the four ribonucleoside triphosphates as substrates. The polypeptide is DNA-directed RNA polymerase subunit beta' (Acorus calamus var. americanus (American sweet flag)).